We begin with the raw amino-acid sequence, 501 residues long: UPF0371 protein CD630_08980 (501 aa).

The protein belongs to the UPF0371 family.

The protein is UPF0371 protein CD630_08980 of Clostridioides difficile (strain 630) (Peptoclostridium difficile).